Reading from the N-terminus, the 304-residue chain is Acetylxylan esterase A (304 aa).

The signal sequence occupies residues M1 to A19. S147 functions as the Charge relay system in the catalytic mechanism. An N-linked (GlcNAc...) asparagine glycan is attached at N189.

The protein belongs to the carbohydrate esterase 1 (CE1) family. AxeA subfamily. Monomer.

The protein localises to the secreted. It carries out the reaction Deacetylation of xylans and xylo-oligosaccharides.. It functions in the pathway glycan degradation; xylan degradation. In terms of biological role, acetylxylan esterase involved in the hydrolysis of xylan, a major structural heterogeneous polysaccharide found in plant biomass representing the second most abundant polysaccharide in the biosphere, after cellulose. Degrades acetylated xylans by cleaving acetyl side groups from the hetero-xylan backbone. This chain is Acetylxylan esterase A (axeA), found in Emericella nidulans (strain FGSC A4 / ATCC 38163 / CBS 112.46 / NRRL 194 / M139) (Aspergillus nidulans).